A 195-amino-acid polypeptide reads, in one-letter code: Probable GTP-binding protein EngB (195 aa).

Residues 22–195 form the EngB-type G domain; sequence GRPEVALAGR…WAALLPFVAS (174 aa). GTP is bound by residues 30–37, 57–61, 75–78, 142–145, and 174–176; these read GRSNVGKS, GKTQT, DVPG, TKAD, and FSA. Positions 37 and 59 each coordinate Mg(2+).

Belongs to the TRAFAC class TrmE-Era-EngA-EngB-Septin-like GTPase superfamily. EngB GTPase family. Mg(2+) is required as a cofactor.

Functionally, necessary for normal cell division and for the maintenance of normal septation. The polypeptide is Probable GTP-binding protein EngB (Geobacillus kaustophilus (strain HTA426)).